A 301-amino-acid chain; its full sequence is Porphobilinogen deaminase (301 aa).

S-(dipyrrolylmethanemethyl)cysteine is present on Cys242.

The protein belongs to the HMBS family. Monomer. Dipyrromethane serves as cofactor.

It catalyses the reaction 4 porphobilinogen + H2O = hydroxymethylbilane + 4 NH4(+). It participates in porphyrin-containing compound metabolism; protoporphyrin-IX biosynthesis; coproporphyrinogen-III from 5-aminolevulinate: step 2/4. In terms of biological role, tetrapolymerization of the monopyrrole PBG into the hydroxymethylbilane pre-uroporphyrinogen in several discrete steps. This Rickettsia canadensis (strain McKiel) protein is Porphobilinogen deaminase.